The sequence spans 800 residues: Chondroitin sulfate synthase 1 (800 aa).

Topologically, residues 1–7 (MAARGRR) are cytoplasmic. Residues 8–28 (AWLSMLLGLVLGFVLASRLVL) traverse the membrane as a helical; Signal-anchor for type II membrane protein segment. Residues 29-800 (PRASELKRVG…GGSHGSARTA (772 aa)) lie on the Lumenal side of the membrane. Residues 36 to 66 (RVGPRRRPSPEGCRPGQEASQPGGARGDARG) are disordered. Residues asparagine 188 and asparagine 622 are each glycosylated (N-linked (GlcNAc...) asparagine). A divalent metal cation is bound by residues aspartate 632 and histidine 746.

It belongs to the chondroitin N-acetylgalactosaminyltransferase family. The cofactor is Co(2+). It depends on Mn(2+) as a cofactor. Requires Cd(2+) as cofactor.

Its subcellular location is the golgi apparatus. It is found in the golgi stack membrane. The protein resides in the secreted. It catalyses the reaction 3-O-(beta-D-GlcA-(1-&gt;3)-beta-D-GalNAc-(1-&gt;4)-beta-D-GlcA-(1-&gt;3)-beta-D-Gal-(1-&gt;3)-beta-D-Gal-(1-&gt;4)-beta-D-Xyl)-L-seryl-[protein] + UDP-N-acetyl-alpha-D-galactosamine = 3-O-(beta-D-GalNAc-(1-&gt;4)-beta-D-GlcA-(1-&gt;3)-beta-D-GalNAc-(1-&gt;4)-beta-D-GlcA-(1-&gt;3)-beta-D-Gal-(1-&gt;3)-beta-D-Gal-(1-&gt;4)-beta-D-Xyl)-L-seryl-[protein] + UDP + H(+). The enzyme catalyses 3-O-{beta-D-GlcA-(1-&gt;3)-[beta-D-GalNAc-(1-&gt;4)-beta-D-GlcA-(1-&gt;3)](n)-beta-D-GalNAc-(1-&gt;4)-beta-D-GlcA-(1-&gt;3)-beta-D-Gal-(1-&gt;3)-beta-D-Gal-(1-&gt;4)-beta-D-Xyl}-L-seryl-[protein] + UDP-N-acetyl-alpha-D-galactosamine = 3-O-{[beta-D-GalNAc-(1-&gt;4)-beta-D-GlcA-(1-&gt;3)](n+1)-beta-D-GalNAc-(1-&gt;4)-beta-D-GlcA-(1-&gt;3)-beta-D-Gal-(1-&gt;3)-beta-D-Gal-(1-&gt;4)-beta-D-Xyl}-L-seryl-[protein] + UDP + H(+). It carries out the reaction 3-O-(beta-D-GalNAc-(1-&gt;4)-beta-D-GlcA-(1-&gt;3)-beta-D-Gal-(1-&gt;3)-beta-D-Gal-(1-&gt;4)-beta-D-Xyl)-L-seryl-[protein] + UDP-alpha-D-glucuronate = 3-O-(beta-D-GlcA-(1-&gt;3)-beta-D-GalNAc-(1-&gt;4)-beta-D-GlcA-(1-&gt;3)-beta-D-Gal-(1-&gt;3)-beta-D-Gal-(1-&gt;4)-beta-D-Xyl)-L-seryl-[protein] + UDP + H(+). The catalysed reaction is 3-O-{[beta-D-GalNAc-(1-&gt;4)-beta-D-GlcA-(1-&gt;3)](n)-beta-D-GalNAc-(1-&gt;4)-beta-D-GlcA-(1-&gt;3)-beta-D-Gal-(1-&gt;3)-beta-D-Gal-(1-&gt;4)-beta-D-Xyl}-L-seryl-[protein] + UDP-alpha-D-glucuronate = 3-O-{beta-D-GlcA-(1-&gt;3)-[beta-D-GalNAc-(1-&gt;4)-beta-D-GlcA-(1-&gt;3)](n)-beta-D-GalNAc-(1-&gt;4)-beta-D-GlcA-(1-&gt;3)-beta-D-Gal-(1-&gt;3)-beta-D-Gal-(1-&gt;4)-beta-D-Xyl}-L-seryl-[protein] + UDP + H(+). Functionally, has both beta-1,3-glucuronic acid and beta-1,4-N-acetylgalactosamine transferase activity. Transfers glucuronic acid (GlcUA) from UDP-GlcUA and N-acetylgalactosamine (GalNAc) from UDP-GalNAc to the non-reducing end of the elongating chondroitin polymer. Involved in the negative control of osteogenesis likely through the modulation of NOTCH signaling. In Mus musculus (Mouse), this protein is Chondroitin sulfate synthase 1 (Chsy1).